The primary structure comprises 459 residues: FAD-dependent monooxygenase CTB5 (459 aa).

Positions 10 to 187 (SDLHPSCIAL…TAVTLKAFEQ (178 aa)) constitute an FAD-binding PCMH-type domain.

It belongs to the oxygen-dependent FAD-linked oxidoreductase family.

Its pathway is mycotoxin biosynthesis. Its function is as follows. FAD-dependent monooxygenase; part of the gene cluster that mediates the biosynthesis of cercosporin, a light-activated, non-host-selective toxin. The perylenequinone chromophore of cercosporin absorbs light energy to attain an electronically-activated triplet state and produces active oxygen species such as the hydroxyl radical, superoxide, hydrogen peroxide or singlet oxygen upon reaction with oxygen molecules. These reactive oxygen species cause damage to various cellular components including lipids, proteins and nucleic acids. The first step of cercosporin biosynthesis is performed by the polyketide synthase CTB1 which catalyzes the formation of nor-toralactone. The starter unit acyltransferase (SAT) domain of CTB1 initiates polyketide extension by the selective utilization of acetyl-CoA, which is elongated to the heptaketide in the beta-ketoacyl synthase (KS) domain by successive condensations with six malonyl units introduced by the malonyl acyltransferase (MAT) domain. The product template (PT) domain catalyzes C4-C9 and C2-C11 aldol cyclizations and dehydrations to a trihydroxynaphthalene, which is thought to be delivered to the thioesterase (TE) domain for product release. The bifunctional enzyme CTB3 then methylates nor-toralactone to toralactone before conducting an unusual oxidative aromatic ring opening. The O-methyltransferase CTB2 further methylates the nascent OH-6 of the CBT3 product, blocking further oxidation at this site before the reductase CTB6 reduces the 2-oxopropyl ketone at position C7, giving naphthalene. The FAD-dependent monooxygenase CTB5 in concert with the multicopper oxidase CTB12 are responsible for homodimerization of naphthalene with CTB7 installing the dioxepine moiety, finally producing cercosporin. The fasciclin domain-containing protein CTB11 might act with CTB5 and CTB12 whereas the roles of CTB9 and CTB10 have still to be elucidated. This is FAD-dependent monooxygenase CTB5 from Cercospora nicotianae (Barn spot disease fungus).